The sequence spans 546 residues: Chaperonin GroEL (546 aa).

Residues 30–33, K51, 87–91, G415, 479–481, and D495 contribute to the ATP site; these read TLGP, DGTTT, and NAA. The interval 527 to 546 is disordered; the sequence is DKPAAPPMPGGMGGMGGMDF. Over residues 536–546 the composition is skewed to gly residues; that stretch reads GGMGGMGGMDF.

Belongs to the chaperonin (HSP60) family. Forms a cylinder of 14 subunits composed of two heptameric rings stacked back-to-back. Interacts with the co-chaperonin GroES.

Its subcellular location is the cytoplasm. The enzyme catalyses ATP + H2O + a folded polypeptide = ADP + phosphate + an unfolded polypeptide.. Its function is as follows. Together with its co-chaperonin GroES, plays an essential role in assisting protein folding. The GroEL-GroES system forms a nano-cage that allows encapsulation of the non-native substrate proteins and provides a physical environment optimized to promote and accelerate protein folding. The protein is Chaperonin GroEL of Bordetella petrii (strain ATCC BAA-461 / DSM 12804 / CCUG 43448).